The sequence spans 150 residues: MLAQFYVNLVVLLVLLICGLLSQNAAVTIAAGVLIVIKITPLNQFFPYIQAHGLNLGILILTIGVLTPIASGKLSGESILKSFISFKSLVAIAIGLLVAWLGGRGVKLMSSQPDVVAGLLIGTVAGVALLRGVPVGPLIAAGLLSLFIGK.

4 helical membrane passes run 1–21 (MLAQ…CGLL), 45–65 (FFPY…TIGV), 83–103 (FISF…WLGG), and 115–135 (VVAG…GVPV).

It belongs to the UPF0756 family.

The protein resides in the cell membrane. The polypeptide is UPF0756 membrane protein ACICU_02320 (Acinetobacter baumannii (strain ACICU)).